Consider the following 1483-residue polypeptide: Dynein axonemal assembly factor 1 homolog (1483 aa).

LRR repeat units follow at residues 34–56 (RLNDVLYLHYQGFQCIESLEEYT), 57–78 (ELKCLWLECNAISEIQGLEKLS), 79–100 (KLKCLFLQNNLITKIENLDPCR), 101–122 (ELDTLNLSSNHIRKIQNIGTNV), 125–146 (VLNTLTISSNYLKDSESLSDLI), and 150–171 (TLSVLDLSNNRIDDILIVKIFE). Residues 185–223 (PVVSRLPQYRKTLILACKELTYLDSRPVFPRDRACAEAW) form the LRRCT domain. 4 disordered regions span residues 249–282 (SINCTIRMRNSHRPPDQQDPLLRSSDSEDDTCAE), 300–327 (EEVSGEQPISEDGTNSSSSLEDNDGTSS), 945–986 (DSGD…HGTK), and 1167–1213 (SENE…SIDD). Over residues 311–327 (DGTNSSSSLEDNDGTSS) the composition is skewed to polar residues. The segment covering 1183 to 1196 (TNDKESSDIMEKNG) has biased composition (basic and acidic residues).

Belongs to the DNAAF1 family.

Its subcellular location is the cell projection. It localises to the cilium. Cilium-specific protein required for cilia structures. The polypeptide is Dynein axonemal assembly factor 1 homolog (dtr) (Drosophila melanogaster (Fruit fly)).